The following is a 469-amino-acid chain: 3-isopropylmalate dehydratase large subunit (469 aa).

Residues C347, C407, and C410 each coordinate [4Fe-4S] cluster.

It belongs to the aconitase/IPM isomerase family. LeuC type 1 subfamily. In terms of assembly, heterodimer of LeuC and LeuD. [4Fe-4S] cluster is required as a cofactor.

The enzyme catalyses (2R,3S)-3-isopropylmalate = (2S)-2-isopropylmalate. It participates in amino-acid biosynthesis; L-leucine biosynthesis; L-leucine from 3-methyl-2-oxobutanoate: step 2/4. Functionally, catalyzes the isomerization between 2-isopropylmalate and 3-isopropylmalate, via the formation of 2-isopropylmaleate. This is 3-isopropylmalate dehydratase large subunit from Photorhabdus laumondii subsp. laumondii (strain DSM 15139 / CIP 105565 / TT01) (Photorhabdus luminescens subsp. laumondii).